Consider the following 799-residue polypeptide: MSQLRSGASAPRSPFPLLPLRTGVLFPGTVLTLPVGRPRSVALLNAVHAGDVIGVIAQRDPKREDPRREDLHDIGTFARVVDISRVSNGYRLVIEGLDRFALSALVETEPTWRAEGTLAPEFLGDAEEARLLAASLRERAREVGPKTGTNLAEIAATSRAEPGVFADQVAGALGLPTEKEMEVLSELRVVPRLQRVAGLLAEASALADLKKKIDGDVRRELGKGQREVILREQLRAIQKELAGGEEGEDELSALRRRLDEAGLPEEARAVADRELRRLESVGPQSAEHNVIRTYLEWIADLPWSARAEVKDDLDAVKAKLDEEHRGLDDVKRRILEHMAVLKLTGKARATILCFAGPPGVGKTSLGQSIADATGRPFVRISLGGVHDEAELRGHRRTYVGALPGRIVHALKKAKVKNPIVLLDEVDKLGAGWRGSPEAALLEVLDPEQNRTFVDHYLELPFDLSEVVFLCTVNDLGALSAPLRDRLEVIELSGYTPDEKIAIARSHLVPKQLKEHAIDPGSLSITDEALAAIVRDYTREAGVRQLGREIKKLCRAVALEIARAADGKAPRVVVEASDLGTYLGKVRFFSDVAERTSVAGVATGLAWTPVGGDILFIETSRMPGKGRVEITGQLGDVMKESAKAALTYVRSHAIELGVDTAKLEAEDLHIHVPAGGVPKDGPSAGVTMFTALTSLLSARRVRSDTAMTGECTLRGRVLPVGGIKSKVLAAHRAGIKRVVLPQKNARDAEEIPKEVRAELELIFVEDMSQVIAAALEEAPIEAAGTGGVTGAAAGEPAAAA.

Residues 15–204 enclose the Lon N-terminal domain; it reads FPLLPLRTGV…RVAGLLAEAS (190 aa). 356–363 serves as a coordination point for ATP; sequence GPPGVGKT. In terms of domain architecture, Lon proteolytic spans 595 to 776; the sequence is TSVAGVATGL…SQVIAAALEE (182 aa). Catalysis depends on residues S682 and K725.

The protein belongs to the peptidase S16 family. In terms of assembly, homohexamer. Organized in a ring with a central cavity.

It localises to the cytoplasm. The catalysed reaction is Hydrolysis of proteins in presence of ATP.. In terms of biological role, ATP-dependent serine protease that mediates the selective degradation of mutant and abnormal proteins as well as certain short-lived regulatory proteins. Required for cellular homeostasis and for survival from DNA damage and developmental changes induced by stress. Degrades polypeptides processively to yield small peptide fragments that are 5 to 10 amino acids long. Binds to DNA in a double-stranded, site-specific manner. This chain is Lon protease 4, found in Sorangium cellulosum (strain So ce56) (Polyangium cellulosum (strain So ce56)).